The primary structure comprises 258 residues: Short-chain dehydrogenase chyC (258 aa).

The NADP(+) site is built by arginine 37, aspartate 55, asparagine 81, tyrosine 154, lysine 158, valine 185, and threonine 187. Residue tyrosine 154 is the Proton donor of the active site. The active-site Lowers pKa of active site Tyr is the lysine 158.

It belongs to the short-chain dehydrogenases/reductases (SDR) family.

Short-chain dehydrogenase; part of the gene cluster that mediates the biosynthesis of the yellow pigment chrysogine. the NRPS chyA mediates the condensation of anthranilic acid and alanine into the intermediate 2-(2-aminopropanamido)benzoic acid. The remainder of the pathway is highly branched yielding at least 13 chrysogine-related compounds. The malonyl transferase chyE converts 2-(2-aminopropanamido)benzoic acid and 2-(2-aminopropanamido)benzamidine into 2-(2-(2-carboxyacetamido)propanamido)benzoic acid and 3-((1-((2-carbamoylphenyl)amino)-1-oxopropan-2-yl)amino)-3-oxopropanoic acid, respectively. ChyD is an amidase, being responsible for the amidation of the carboxylic acid moiety of 2-(2-aminopropanamido)benzoic acid, 2-(2-(2-carboxyacetamido)propanamido)benzoic acid and 2-(2-((4-amino-1-carboxy-4-oxobutyl)amino)propanamido)benzoic acid. ChyC is involved in the same reactions as ChyD, but plays a more minor role in the amidation reactions compared to chyD. The oxidoreductases chyH and chyM are involved in oxidation reactions that form N-pyruvoylanthranilamide from 2-(2-aminopropanamido)benzamidine and (1-((2-carbamoylphenyl)amino)-1-oxopropan-2-yl)glutamine, respectively. N-pyruvoylanthranilamide is further converted via two further branches in the pathway, yielding chrysogine and additional chrysogine-related coumpounds. Chrysogine is likely formed by a spontaneous ring closure from N-pyruvoylanthranilamide. The polypeptide is Short-chain dehydrogenase chyC (Penicillium rubens (strain ATCC 28089 / DSM 1075 / NRRL 1951 / Wisconsin 54-1255) (Penicillium chrysogenum)).